A 364-amino-acid chain; its full sequence is Probable 7-methylxanthine methyltransferase 5 (364 aa).

S-adenosyl-L-homocysteine is bound at residue Y19. T26 contributes to the theobromine binding site. The S-adenosyl-L-homocysteine site is built by C64, Q69, D101, L102, S134, and F135. The theobromine site is built by Y152, H155, and W156. N172, D258, F260, and N261 together coordinate Mg(2+). Position 314 (F314) interacts with theobromine.

This sequence belongs to the methyltransferase superfamily. Type-7 methyltransferase family. Mg(2+) serves as cofactor.

The enzyme catalyses 7-methylxanthine + S-adenosyl-L-methionine = theobromine + S-adenosyl-L-homocysteine + H(+). The protein operates within alkaloid biosynthesis. Involved in the biosynthesis of theobromine. In Theobroma cacao (Cacao), this protein is Probable 7-methylxanthine methyltransferase 5.